The sequence spans 1026 residues: MAQGAMRFCSEGDCAISPPRCPRRWLPEGPVPQSPPASMYGSTGSLLRRVAGPGPRSRELGRVTAPCTPLRGPPSPRIAPSPWAPSSPTGQPPPGARSSVVIFRFVEKASVRPLNGLPAPGGLSRSWDLGGVSPPRPTPALGPGSHQKLRLEASTSDPLPAGGGSARPGTQGLLQGPPTQPQVGADGLYSSLPNGLGGPSEHLATLFRGPADTGLLNQGDIWSSPREVSSHAQRIARAKWEFFYGSLDPPSSGAKPPEQAPPSPPGVGSGQGSGVAVGRAAKYSETDLDTVPLRCYRETDIDEVLTEREEADSAIESQPSSEGLPGTARPPAPRPGPCLGPHPSLGSGNEDEDEAGGEEDVDDEVFEASEGARPGTRMPHSGPLKSPLPFLPGTSPSADGPDSFSCVFEAILESHRAKGTSYTSLASLEALASPGPTQSPFFTFELPPQPPAPRPDPPAPAPLAPLEPDSGTSSAADGPWTQRGEEEEAEAGAKQTPGRDPPSPCHSEDSFGLGAAPLGSEPPLNQLVSDSDSELDSTERLALGSTDTLSNGQKADLEAAQRLAKRLYRLDGFRKADVARHLGKNNDFSKLVAGEYLKFFVFTGMTLDQALRVFLKELALMGETQERERVLAHFSQRYFQCNPGALSSEDGAHTLTCALMLLNTDLHGHNIAETHDLRRLHRYLEGLNEGGDFPRELLKALYSSIKNEKLQWAIDEEELRRSLSELADPNPKVIKRVSGGSGSGSSPFLDLTPEPGAAVYKHGALVRKVHADPDCRKTPRGKRGWKNFHGILKGMILYLQKEEYQPGKALSEAELKNAISIHHALATRASDYSKRPHVFYLRTADWRVFLFQAPSLEQMQSWITRINVVAAMFSAPPFPAAVSSQKKFSRPLLPSAATRLSQEEQVRTHEAKLKAMASELREHRATQLTKKARGKEAEEQRQKEAYLEFEKSRYGTYAALLRVKLKAGSEELDAVEAAVAQAGGTEDGLPPPHSSPSLPANTSSQPRAQCSDSEARAGAGSGRWKP.

Disordered stretches follow at residues W25 to R97, S126 to L196, S246 to S403, and P436 to T538. Positions R71–G95 are enriched in pro residues. Phosphoserine is present on residues S126 and S156. Over residues P168–G184 the composition is skewed to low complexity. Residues D300 to S313 are compositionally biased toward acidic residues. A compositionally biased stretch (pro residues) spans A328 to G340. A compositionally biased stretch (acidic residues) spans N349 to E367. Residues P447–P465 show a composition bias toward pro residues. Residues G514 to E708 form the SEC7 domain. S722 carries the post-translational modification Phosphoserine. The region spanning A758 to A871 is the PH domain. The stretch at L900 to T926 forms a coiled coil. 2 disordered regions span residues R924–K943 and A978–P1026. The span at G934–K943 shows a compositional bias: basic and acidic residues. Over residues A1000 to D1012 the composition is skewed to polar residues.

The protein belongs to the PSD family. Interacts with ACTN1.

Its subcellular location is the cell membrane. The protein localises to the cell projection. The protein resides in the ruffle membrane. It is found in the cleavage furrow. Guanine nucleotide exchange factor for ARF6. Induces cytoskeletal remodeling. The protein is PH and SEC7 domain-containing protein 1 (PSD) of Bos taurus (Bovine).